We begin with the raw amino-acid sequence, 1907 residues long: Receptor-type tyrosine-protein phosphatase F (1907 aa).

Positions 1-29 (MAPEPAPGRTMVPLVPALVMLGLVAGAHG) are cleaved as a signal peptide. Topologically, residues 30-1263 (DSKPVFIKVP…QQQEEPEMLW (1234 aa)) are extracellular. Ig-like C2-type domains follow at residues 33–123 (PVFI…AKLS), 135–224 (PSID…ANLY), and 232–314 (PRFS…AQVT). A disulfide bond links Cys54 and Cys107. A heparin-binding site is contributed by 68–77 (KKGKKVSSQR). An N-linked (GlcNAc...) asparagine glycan is attached at Asn117. A disulfide bridge connects residues Cys156 and Cys207. Asn250 and Asn295 each carry an N-linked (GlcNAc...) asparagine glycan. Cys253 and Cys298 are disulfide-bonded. 8 Fibronectin type-III domains span residues 321 to 411 (PPID…TGEQ), 416 to 510 (PPRR…TQQG), 514 to 604 (QPAD…TAQS), 609 to 706 (PPQK…TDED), 711 to 819 (PPRK…TTGA), 820 to 914 (VPGR…PEDL), 918 to 1010 (FPQN…TMPV), and 1014 to 1098 (FAKN…TAPD). The tract at residues 398–417 (GPPSEAVRARTGEQAPSSPP) is disordered. A disordered region spans residues 693 to 712 (GPESSPVLVRTDEDVPSGPP). Residue Asn721 is glycosylated (N-linked (GlcNAc...) asparagine). Residue Asn966 is glycosylated (N-linked (GlcNAc...) asparagine). A helical transmembrane segment spans residues 1264 to 1284 (VTGPVLAVILIILIVIAILLF). Topologically, residues 1285–1907 (KRKRTHSPSS…YLGSFDHYAT (623 aa)) are cytoplasmic. The residue at position 1305 (Ser1305) is a Phosphoserine. Tyrosine-protein phosphatase domains are found at residues 1352 to 1607 (FSQE…LLEA) and 1639 to 1898 (MELE…ALEY). Substrate-binding positions include Asp1516, 1548 to 1554 (CSAGVGR), and Gln1592. The active-site Phosphocysteine intermediate is the Cys1548. The active-site Phosphocysteine intermediate is the Cys1839.

Belongs to the protein-tyrosine phosphatase family. Receptor class 2A subfamily. In terms of assembly, interacts with GRIP1. Interacts with PPFIA1, PPFIA2 and PPFIA3. Interacts with INSR.

Its subcellular location is the membrane. It catalyses the reaction O-phospho-L-tyrosyl-[protein] + H2O = L-tyrosyl-[protein] + phosphate. Possible cell adhesion receptor. It possesses an intrinsic protein tyrosine phosphatase activity (PTPase) and dephosphorylates EPHA2 regulating its activity. In terms of biological role, the first PTPase domain has enzymatic activity, while the second one seems to affect the substrate specificity of the first one. The protein is Receptor-type tyrosine-protein phosphatase F (PTPRF) of Homo sapiens (Human).